The chain runs to 119 residues: Iron-sulfur cluster insertion protein ErpA (119 aa).

Residues cysteine 47, cysteine 111, and cysteine 113 each contribute to the iron-sulfur cluster site.

Belongs to the HesB/IscA family. In terms of assembly, homodimer. Requires iron-sulfur cluster as cofactor.

Required for insertion of 4Fe-4S clusters for at least IspG. The polypeptide is Iron-sulfur cluster insertion protein ErpA (Blochmanniella floridana).